A 74-amino-acid chain; its full sequence is ATP synthase subunit c (74 aa).

2 helical membrane passes run 8-28 (FIGVGCMAIGMLGAALGVSNI) and 52-72 (IGAGLAEAMGLFSFVIAMLLI).

The protein belongs to the ATPase C chain family. In terms of assembly, F-type ATPases have 2 components, F(1) - the catalytic core - and F(0) - the membrane proton channel. F(1) has five subunits: alpha(3), beta(3), gamma(1), delta(1), epsilon(1). F(0) has three main subunits: a(1), b(2) and c(10-14). The alpha and beta chains form an alternating ring which encloses part of the gamma chain. F(1) is attached to F(0) by a central stalk formed by the gamma and epsilon chains, while a peripheral stalk is formed by the delta and b chains.

The protein localises to the cell inner membrane. In terms of biological role, f(1)F(0) ATP synthase produces ATP from ADP in the presence of a proton or sodium gradient. F-type ATPases consist of two structural domains, F(1) containing the extramembraneous catalytic core and F(0) containing the membrane proton channel, linked together by a central stalk and a peripheral stalk. During catalysis, ATP synthesis in the catalytic domain of F(1) is coupled via a rotary mechanism of the central stalk subunits to proton translocation. Key component of the F(0) channel; it plays a direct role in translocation across the membrane. A homomeric c-ring of between 10-14 subunits forms the central stalk rotor element with the F(1) delta and epsilon subunits. The chain is ATP synthase subunit c from Rickettsia bellii (strain RML369-C).